The primary structure comprises 279 residues: Zinc finger CCCH domain-containing protein 1 (279 aa).

Residues 20–45 (DVIVLSPGPPARRRPPPVKAVEPESG) are disordered. 2 C3H1-type zinc fingers span residues 56 to 84 (FYKTRVCETFVTSGRCMFEDGCTFAHGDE) and 139 to 167 (RAITKVCFEFRDKGICYFGETCAFPHVSA).

This chain is Zinc finger CCCH domain-containing protein 1, found in Oryza sativa subsp. japonica (Rice).